The following is a 233-amino-acid chain: MASGLPHPVLLSDLVGLGHINVGGQSVEFKHVFYTWCVMAMLFAVSFIVRGKIKMVPGKLQNIFEVIIGGLEEFVVSITGEDGRKVYPVLIVFFLFILCMNLTGLVPGFDAPTANINTTASLALFCFIYYNYIGIQRWGAGYIKHFMGPMWWLSPLMLPLELISHTARPLSLSLRLFGNIRGEEFVLILFFMLAPIIGTIPIYFLFTLAKVLQAFIFFMLATIYLKGSLEHAH.

The next 7 membrane-spanning stretches (helical) occupy residues 29–49, 60–80, 89–109, 115–135, 143–163, 185–205, and 206–226; these read FKHV…SFIV, LQNI…SITG, VLIV…VPGF, NINT…YIGI, IKHF…LELI, FVLI…IYFL, and FTLA…IYLK.

The protein belongs to the ATPase A chain family. F-type ATPases have 2 components, CF(1) - the catalytic core - and CF(0) - the membrane proton channel. CF(1) has five subunits: alpha(3), beta(3), gamma(1), delta(1), epsilon(1). CF(0) has three main subunits: a(1), b(2) and c(9-12). The alpha and beta chains form an alternating ring which encloses part of the gamma chain. CF(1) is attached to CF(0) by a central stalk formed by the gamma and epsilon chains, while a peripheral stalk is formed by the delta and b chains.

The protein resides in the cell inner membrane. Key component of the proton channel; it plays a direct role in the translocation of protons across the membrane. The chain is ATP synthase subunit a from Oleidesulfovibrio alaskensis (strain ATCC BAA-1058 / DSM 17464 / G20) (Desulfovibrio alaskensis).